A 245-amino-acid chain; its full sequence is Fibroblast growth factor 13 (245 aa).

Disordered stretches follow at residues 1–37 and 213–245; these read MAAA…SKGN and TEFS…NDST. The interval 1–62 is mediates targeting to the nucleus; it reads MAAAIASSLI…GSKKRRRRRP (62 aa). Residues 215-245 are compositionally biased toward polar residues; sequence FSRSGSGTPTKSRSVSGVLNGGKSMSQNDST.

The protein belongs to the heparin-binding growth factors family.

It localises to the cell projection. It is found in the filopodium. The protein resides in the growth cone. The protein localises to the dendrite. Its subcellular location is the cell membrane. It localises to the sarcolemma. It is found in the cytoplasm. Microtubule-binding protein which directly binds tubulin and is involved in both polymerization and stabilization of microtubules. Through its action on microtubules, may participate in the refinement of axons by negatively regulating axonal and leading processes branching. Plays a crucial role in neuron polarization and migration. Regulates voltage-gated sodium channel transport and function. Required for proper head development, it is involved in neural differentiation through regulation of the mek5-erk5 pathway. This chain is Fibroblast growth factor 13 (fgf13), found in Xenopus laevis (African clawed frog).